A 388-amino-acid polypeptide reads, in one-letter code: Leucine aminopeptidase 1 (388 aa).

Residues 1–19 (MKSLSLLALAAIAPPAAVA) form the signal peptide. Positions 20-88 (AVVDRQVPFE…SAKSHERIQV (69 aa)) are excised as a propeptide. The N-linked (GlcNAc...) asparagine glycan is linked to N180. Residues H188, D207, E246, and D273 each contribute to the Zn(2+) site. Cysteines 322 and 326 form a disulfide. Residue H355 coordinates Zn(2+).

The protein belongs to the peptidase M28 family. M28E subfamily. As to quaternary structure, monomer. Requires Zn(2+) as cofactor.

It is found in the secreted. Functionally, extracellular aminopeptidase that allows assimilation of proteinaceous substrates. This Coccidioides posadasii (strain C735) (Valley fever fungus) protein is Leucine aminopeptidase 1 (LAP1).